A 301-amino-acid polypeptide reads, in one-letter code: UDP-3-O-acyl-N-acetylglucosamine deacetylase (301 aa).

Zn(2+) is bound by residues H81, H237, and D241. The active-site Proton donor is H264.

This sequence belongs to the LpxC family. It depends on Zn(2+) as a cofactor.

It carries out the reaction a UDP-3-O-[(3R)-3-hydroxyacyl]-N-acetyl-alpha-D-glucosamine + H2O = a UDP-3-O-[(3R)-3-hydroxyacyl]-alpha-D-glucosamine + acetate. Its pathway is glycolipid biosynthesis; lipid IV(A) biosynthesis; lipid IV(A) from (3R)-3-hydroxytetradecanoyl-[acyl-carrier-protein] and UDP-N-acetyl-alpha-D-glucosamine: step 2/6. In terms of biological role, catalyzes the hydrolysis of UDP-3-O-myristoyl-N-acetylglucosamine to form UDP-3-O-myristoylglucosamine and acetate, the committed step in lipid A biosynthesis. This Leptospira interrogans serogroup Icterohaemorrhagiae serovar copenhageni (strain Fiocruz L1-130) protein is UDP-3-O-acyl-N-acetylglucosamine deacetylase.